Reading from the N-terminus, the 693-residue chain is Polyribonucleotide nucleotidyltransferase (693 aa).

2 residues coordinate Mg(2+): aspartate 489 and aspartate 495. Residues 556 to 615 (PQIHVMNINPAKIKDVVGRGGATVKGIVEKTGAQIDTSDSGEVKVFAKDKKSMDMAVAMI) enclose the KH domain. Positions 625–693 (GQVYKGKIVK…GRVKLSLVAR (69 aa)) constitute an S1 motif domain.

It belongs to the polyribonucleotide nucleotidyltransferase family. As to quaternary structure, component of the RNA degradosome, which is a multiprotein complex involved in RNA processing and mRNA degradation. Mg(2+) is required as a cofactor.

The protein localises to the cytoplasm. It catalyses the reaction RNA(n+1) + phosphate = RNA(n) + a ribonucleoside 5'-diphosphate. In terms of biological role, involved in mRNA degradation. Catalyzes the phosphorolysis of single-stranded polyribonucleotides processively in the 3'- to 5'-direction. The polypeptide is Polyribonucleotide nucleotidyltransferase (Francisella tularensis subsp. mediasiatica (strain FSC147)).